Reading from the N-terminus, the 440-residue chain is Deoxyguanosinetriphosphate triphosphohydrolase-like protein (440 aa).

Positions Arg-61–Ser-256 constitute an HD domain.

Belongs to the dGTPase family. Type 3 subfamily.

The sequence is that of Deoxyguanosinetriphosphate triphosphohydrolase-like protein from Synechocystis sp. (strain ATCC 27184 / PCC 6803 / Kazusa).